A 106-amino-acid polypeptide reads, in one-letter code: Toxin-like structure LSTX-D9 (106 aa).

The first 20 residues, 1-20, serve as a signal peptide directing secretion; the sequence is MMKVLVVVALLLTLIIYSSS. Positions 21-41 are excised as a propeptide; it reads DGIDDLEADELVSLMAHEQTR. Disulfide bonds link C45/C60, C52/C69, C59/C85, and C71/C83.

It belongs to the neurotoxin 19 (CSTX) family. 02 (D7) subfamily. Expressed by the venom gland.

It is found in the secreted. In Lycosa singoriensis (Wolf spider), this protein is Toxin-like structure LSTX-D9.